The following is a 925-amino-acid chain: Conserved oligomeric Golgi complex subunit 3 (925 aa).

Disordered stretches follow at residues 68-88, 416-446, and 863-925; these read EENQ…QQQQ, DLNN…NNTN, and SKQS…PQQL. Composition is skewed to low complexity over residues 71–88, 418–446, and 867–904; these read QQLQ…QQQQ, NNNN…NNTN, and NNNN…NNKN.

Belongs to the COG3 family. In terms of assembly, component of the conserved oligomeric Golgi complex which is composed of eight different subunits and is required for normal Golgi morphology and localization.

The protein resides in the golgi apparatus membrane. In terms of biological role, required for normal Golgi function. The protein is Conserved oligomeric Golgi complex subunit 3 (cog3) of Dictyostelium discoideum (Social amoeba).